The primary structure comprises 74 residues: ATP synthase subunit c (74 aa).

2 helical membrane passes run 5–25 (LAYIGAGLAGMGTGIAALGVG) and 49–69 (LFIGIAFAEALGIFSFLVALL).

Belongs to the ATPase C chain family. F-type ATPases have 2 components, F(1) - the catalytic core - and F(0) - the membrane proton channel. F(1) has five subunits: alpha(3), beta(3), gamma(1), delta(1), epsilon(1). F(0) has three main subunits: a(1), b(2) and c(10-14). The alpha and beta chains form an alternating ring which encloses part of the gamma chain. F(1) is attached to F(0) by a central stalk formed by the gamma and epsilon chains, while a peripheral stalk is formed by the delta and b chains.

Its subcellular location is the cell inner membrane. Functionally, f(1)F(0) ATP synthase produces ATP from ADP in the presence of a proton or sodium gradient. F-type ATPases consist of two structural domains, F(1) containing the extramembraneous catalytic core and F(0) containing the membrane proton channel, linked together by a central stalk and a peripheral stalk. During catalysis, ATP synthesis in the catalytic domain of F(1) is coupled via a rotary mechanism of the central stalk subunits to proton translocation. In terms of biological role, key component of the F(0) channel; it plays a direct role in translocation across the membrane. A homomeric c-ring of between 10-14 subunits forms the central stalk rotor element with the F(1) delta and epsilon subunits. This chain is ATP synthase subunit c, found in Ruegeria sp. (strain TM1040) (Silicibacter sp.).